We begin with the raw amino-acid sequence, 345 residues long: MARKWNLPFLLLPLVLGIPLVRGSNPLPLVVNTWPFKNATEAAWWTLVSGGSALDAVEKGCAMCEKEQCGGTVGFGGSPDEVGETTLDAMIMDGTAMDVGAVGGLRRIKNAIGVARKVLEHTTHTLLVGDSATKFAVSMGFTSEDLSTNTSRALHSDWLSRNCQPNYWRNVIPDPSKYCGPYKPPDFLEQNNRAHKEVDIHSHDTIGMVVIHKTGHTAAGTSTNGLKFKIPGRVGDSPIPGAGAYADDMAGAAAATGDGDTLLRFLPSYQAVEYMRGGDDPARACQKVISRIQKYYPKFFGAVICANVTGSYGAACNRLPTFTQFSFMVYNSLHNQAIEEKVDCM.

The N-terminal stretch at 1-23 is a signal peptide; the sequence is MARKWNLPFLLLPLVLGIPLVRG. The N-linked (GlcNAc...) asparagine glycan is linked to Asn38. The cysteines at positions 64 and 69 are disulfide-linked. A glycan (N-linked (GlcNAc...) asparagine) is linked at Asn149. Cys163 and Cys179 form a disulfide bridge. The active-site Nucleophile is the Thr205. Substrate is bound by residues 233-236 and 256-259; these read RVGD and TGDG. A disulfide bridge connects residues Cys285 and Cys305. Residue Asn307 is glycosylated (N-linked (GlcNAc...) asparagine). Cys316 and Cys344 are oxidised to a cystine.

Belongs to the Ntn-hydrolase family. Heterotetramer of two alpha and two beta chains arranged as a dimer of alpha/beta heterodimers. N-glycosylated. In terms of processing, cleaved into an alpha and beta chain by autocatalysis; this activates the enzyme. The N-terminal residue of the beta subunit is responsible for the nucleophile hydrolase activity.

Its subcellular location is the lysosome. It catalyses the reaction N(4)-(beta-N-acetyl-D-glucosaminyl)-L-asparagine + H2O = N-acetyl-beta-D-glucosaminylamine + L-aspartate + H(+). Cleaves the GlcNAc-Asn bond which joins oligosaccharides to the peptide of asparagine-linked glycoproteins. This chain is N(4)-(Beta-N-acetylglucosaminyl)-L-asparaginase (Aga), found in Rattus norvegicus (Rat).